A 267-amino-acid chain; its full sequence is Ribosomal RNA small subunit methyltransferase A (267 aa).

Asparagine 16, leucine 18, glycine 43, glutamate 64, aspartate 89, and asparagine 110 together coordinate S-adenosyl-L-methionine.

It belongs to the class I-like SAM-binding methyltransferase superfamily. rRNA adenine N(6)-methyltransferase family. RsmA subfamily.

It is found in the cytoplasm. The catalysed reaction is adenosine(1518)/adenosine(1519) in 16S rRNA + 4 S-adenosyl-L-methionine = N(6)-dimethyladenosine(1518)/N(6)-dimethyladenosine(1519) in 16S rRNA + 4 S-adenosyl-L-homocysteine + 4 H(+). Specifically dimethylates two adjacent adenosines (A1518 and A1519) in the loop of a conserved hairpin near the 3'-end of 16S rRNA in the 30S particle. May play a critical role in biogenesis of 30S subunits. This is Ribosomal RNA small subunit methyltransferase A from Pseudomonas putida (strain ATCC 47054 / DSM 6125 / CFBP 8728 / NCIMB 11950 / KT2440).